Here is a 702-residue protein sequence, read N- to C-terminus: Polyribonucleotide nucleotidyltransferase (702 aa).

Residues D485 and D491 each contribute to the Mg(2+) site. The KH domain occupies 552-612; that stretch reads PRTEIICIDP…EGVKKAISII (61 aa). The S1 motif domain occupies 622–690; it reads GEIYLGKVTK…NQGRINLSRK (69 aa).

This sequence belongs to the polyribonucleotide nucleotidyltransferase family. Mg(2+) is required as a cofactor.

It is found in the cytoplasm. The catalysed reaction is RNA(n+1) + phosphate = RNA(n) + a ribonucleoside 5'-diphosphate. Its function is as follows. Involved in mRNA degradation. Catalyzes the phosphorolysis of single-stranded polyribonucleotides processively in the 3'- to 5'-direction. The protein is Polyribonucleotide nucleotidyltransferase of Clostridium botulinum (strain 657 / Type Ba4).